The primary structure comprises 225 residues: Small ribosomal subunit protein uS3 (225 aa).

Positions 38–106 constitute a KH type-2 domain; sequence IRKFVQNRFN…PVNLNIIEVK (69 aa).

It belongs to the universal ribosomal protein uS3 family. As to quaternary structure, part of the 30S ribosomal subunit. Forms a tight complex with proteins S10 and S14.

In terms of biological role, binds the lower part of the 30S subunit head. Binds mRNA in the 70S ribosome, positioning it for translation. This chain is Small ribosomal subunit protein uS3, found in Leptospira interrogans serogroup Icterohaemorrhagiae serovar copenhageni (strain Fiocruz L1-130).